We begin with the raw amino-acid sequence, 307 residues long: UDP-3-O-acyl-N-acetylglucosamine deacetylase (307 aa).

Residues H78, H241, and D245 each coordinate Zn(2+). The active-site Proton donor is the H268.

This sequence belongs to the LpxC family. It depends on Zn(2+) as a cofactor.

It catalyses the reaction a UDP-3-O-[(3R)-3-hydroxyacyl]-N-acetyl-alpha-D-glucosamine + H2O = a UDP-3-O-[(3R)-3-hydroxyacyl]-alpha-D-glucosamine + acetate. Its pathway is glycolipid biosynthesis; lipid IV(A) biosynthesis; lipid IV(A) from (3R)-3-hydroxytetradecanoyl-[acyl-carrier-protein] and UDP-N-acetyl-alpha-D-glucosamine: step 2/6. Functionally, catalyzes the hydrolysis of UDP-3-O-myristoyl-N-acetylglucosamine to form UDP-3-O-myristoylglucosamine and acetate, the committed step in lipid A biosynthesis. This chain is UDP-3-O-acyl-N-acetylglucosamine deacetylase, found in Paracidovorax citrulli (strain AAC00-1) (Acidovorax citrulli).